The chain runs to 162 residues: uncharacterized protein (162 aa).

3 consecutive transmembrane segments (helical) span residues 7–27 (LIADYGYLAIFLMLVLGIVGL), 51–71 (LSILISFVGALLGMLISYMIG), and 134–154 (TYVAFAAIGAFLWCFVFITIG).

The protein belongs to the DedA family.

It is found in the cell membrane. This is an uncharacterized protein from Bacillus subtilis (strain 168).